Consider the following 157-residue polypeptide: Transcription factor HES-2 (157 aa).

The region spanning 13–70 (LRKSLKPLLEKRRRARINESLSQLKGLVLPLLGAETSRYSKLEKADILEMTVRFLREQ) is the bHLH domain. Residues 86–119 (YLEGYRACLARLARVLPACSVLEPAVSARLLEHL) enclose the Orange domain. The tract at residues 124–157 (VSGGPPSLTPASASAPAPSPPVPPPSSLGLWRPW) is disordered. Residues 125-139 (SGGPPSLTPASASAP) show a composition bias toward low complexity. Residues 140-149 (APSPPVPPPS) are compositionally biased toward pro residues. The WRPW motif signature appears at 154 to 157 (WRPW).

Transcription repression requires formation of a complex with a corepressor protein of the Groucho/TLE family.

It localises to the nucleus. Transcriptional repressor of genes that require a bHLH protein for their transcription. The protein is Transcription factor HES-2 (Hes2) of Rattus norvegicus (Rat).